The primary structure comprises 401 residues: Chorismate synthase (401 aa).

Residues Arg40 and Arg46 each contribute to the NADP(+) site. FMN is bound by residues 135-137, 256-257, Gly300, 315-319, and Arg341; these read RAS, QA, and KPIST.

The protein belongs to the chorismate synthase family. In terms of assembly, homotetramer. Requires FMNH2 as cofactor.

The enzyme catalyses 5-O-(1-carboxyvinyl)-3-phosphoshikimate = chorismate + phosphate. It participates in metabolic intermediate biosynthesis; chorismate biosynthesis; chorismate from D-erythrose 4-phosphate and phosphoenolpyruvate: step 7/7. Its function is as follows. Catalyzes the anti-1,4-elimination of the C-3 phosphate and the C-6 proR hydrogen from 5-enolpyruvylshikimate-3-phosphate (EPSP) to yield chorismate, which is the branch point compound that serves as the starting substrate for the three terminal pathways of aromatic amino acid biosynthesis. This reaction introduces a second double bond into the aromatic ring system. This chain is Chorismate synthase, found in Mycobacterium bovis (strain BCG / Pasteur 1173P2).